The chain runs to 359 residues: Lipopolysaccharide 1,6-galactosyltransferase (359 aa).

UDP is bound by residues glutamine 242 and glutamate 274.

It belongs to the glycosyltransferase group 1 family. Glycosyltransferase 4 subfamily.

It catalyses the reaction alpha-D-Glc-(1-&gt;3)-[L-alpha-D-Hep-(1-&gt;7)]-4-O-PO3(2-)-L-alpha-D-Hep-(1-&gt;3)-4-O-PO3(2-)-L-alpha-D-Hep-(1-&gt;5)-[alpha-Kdo-(2-&gt;4)]-alpha-Kdo-(2-&gt;6)-lipid A + UDP-alpha-D-galactose = alpha-D-Gal-(1-&gt;6)-alpha-D-Glc-(1-&gt;3)-[L-alpha-D-Hep-(1-&gt;7)]-4-O-PO3(2-)-L-alpha-D-Hep-(1-&gt;3)-4-O-PO3(2-)-L-alpha-D-Hep-(1-&gt;5)-[alpha-Kdo-(2-&gt;4)]-alpha-Kdo-(2-&gt;6)-lipid A + UDP + H(+). It participates in bacterial outer membrane biogenesis; LPS core biosynthesis. Its function is as follows. Galactosyltransferase involved in the biosynthesis of the core oligosaccharide region of lipopolysaccharide (LPS). Catalyzes the addition of galactose from UDP-galactose to the first glucose residue of the LPS outer core. Cannot use other sugar donors, such as UDP-glucose, UDP-glucuronic acid, UDP-galacuronic acid, GDP-mannose, ADP-glucose and GDP-glucose. In the absence of a lipid acceptor, can hydrolyze UDP-galactose to UDP and galactose. This is Lipopolysaccharide 1,6-galactosyltransferase from Escherichia coli (strain K12).